The following is a 475-amino-acid chain: Ribulose bisphosphate carboxylase large chain (475 aa).

Positions 1-2 (MS) are excised as a propeptide. P3 bears the N-acetylproline mark. K14 carries the N6,N6,N6-trimethyllysine modification. Residues N123 and T173 each contribute to the substrate site. K175 serves as the catalytic Proton acceptor. Position 177 (K177) interacts with substrate. Mg(2+) is bound by residues K201, D203, and E204. K201 bears the N6-carboxylysine mark. H294 acts as the Proton acceptor in catalysis. Positions 295, 327, and 379 each coordinate substrate.

This sequence belongs to the RuBisCO large chain family. Type I subfamily. In terms of assembly, heterohexadecamer of 8 large chains and 8 small chains; disulfide-linked. The disulfide link is formed within the large subunit homodimers. Requires Mg(2+) as cofactor. The disulfide bond which can form in the large chain dimeric partners within the hexadecamer appears to be associated with oxidative stress and protein turnover.

The protein localises to the plastid. Its subcellular location is the chloroplast. It catalyses the reaction 2 (2R)-3-phosphoglycerate + 2 H(+) = D-ribulose 1,5-bisphosphate + CO2 + H2O. It carries out the reaction D-ribulose 1,5-bisphosphate + O2 = 2-phosphoglycolate + (2R)-3-phosphoglycerate + 2 H(+). RuBisCO catalyzes two reactions: the carboxylation of D-ribulose 1,5-bisphosphate, the primary event in carbon dioxide fixation, as well as the oxidative fragmentation of the pentose substrate in the photorespiration process. Both reactions occur simultaneously and in competition at the same active site. The protein is Ribulose bisphosphate carboxylase large chain of Pseudolarix amabilis (Golden larch).